The chain runs to 212 residues: Thymidylate kinase (212 aa).

Position 13 to 20 (13 to 20) interacts with ATP; that stretch reads GLEGAGKS.

Belongs to the thymidylate kinase family.

The enzyme catalyses dTMP + ATP = dTDP + ADP. Its function is as follows. Phosphorylation of dTMP to form dTDP in both de novo and salvage pathways of dTTP synthesis. In Legionella pneumophila (strain Paris), this protein is Thymidylate kinase.